The sequence spans 802 residues: Cell division cycle 5-like protein (802 aa).

2 HTH myb-type domains span residues 1–56 and 57–108; these read MPRI…WLDP and SIKK…DKAA. 2 consecutive DNA-binding regions (H-T-H motif) follow at residues 31–54 and 82–104; these read WSRIASLLHRKSAKQCKARWYEWL and WRTIAPIIGRTAAQCLEHYEFLL. Residues 108–143 are disordered; sequence AQRDNEEETTDDPRKLKPGEIDPNPETKPARPDPID. The span at 118–127 shows a compositional bias: basic and acidic residues; that stretch reads DDPRKLKPGE. Lys135 participates in a covalent cross-link: Glycyl lysine isopeptide (Lys-Gly) (interchain with G-Cter in SUMO2). The stretch at 142-245 forms a coiled coil; sequence IDMDEDELEM…DADFRKLRQQ (104 aa). Positions 165 to 271 match the Nuclear localization signal motif; the sequence is KKAKRKAREK…KDKQHLKRKK (107 aa). Residues 200–206 form a required for interaction with CTNNBL1 region; that stretch reads KKRKKKR. Lys219 participates in a covalent cross-link: Glycyl lysine isopeptide (Lys-Gly) (interchain with G-Cter in SUMO2). The residue at position 227 (Thr227) is a Phosphothreonine. Positions 246-262 are enriched in basic and acidic residues; the sequence is DLDGELRSEKEGRDRKK. A disordered region spans residues 246-278; that stretch reads DLDGELRSEKEGRDRKKDKQHLKRKKESDLPSA. The tract at residues 260–606 is interaction with PPP1R8; sequence RKKDKQHLKR…NKKGKTVGFG (347 aa). A phosphoserine mark is found at Ser303 and Ser358. Phosphothreonine is present on residues Thr377, Thr385, Thr396, Thr404, Thr411, and Thr415. Residues 409 to 418 are compositionally biased toward polar residues; it reads LSTPFRTPSH. Positions 409 to 459 are disordered; it reads LSTPFRTPSHGSEGLTPRSGTTPKPVINSTPGRTPLRDKLNINPEDGMADY. Position 417 is a phosphoserine (Ser417). Phosphothreonine occurs at positions 424 and 430. The segment covering 426–440 has biased composition (polar residues); that stretch reads RSGTTPKPVINSTPG. Ser437 carries the post-translational modification Phosphoserine. 2 positions are modified to phosphothreonine: Thr438 and Thr442. Lys487 is covalently cross-linked (Glycyl lysine isopeptide (Lys-Gly) (interchain with G-Cter in SUMO2)). Positions 501–659 are interaction with DAPK3; sequence ELEEREIDDT…GELSSEAYNQ (159 aa). 2 coiled-coil regions span residues 676–701 and 764–802; these read RYTRANLASKKDRIESLEKRLEINRG and PRRLECLKEDVQRQQEREKELQHRYADLLLEKETLKAKF. The tract at residues 706 to 800 is interaction with PLRG1; sequence EAKRAAKMEK…LLLEKETLKA (95 aa).

The protein belongs to the CEF1 family. Homodimer. Interacts with DAPK3. Component of the precatalytic, catalytic and postcatalytic spliceosome complexes. Part of a spliceosomal 'core' complex consisting of CDC5L, PLRG1, SPF27, CCAP1, CCAP3 and CCAP6. Interacts with PLRG1, Lodestar/TTF2, and NIPP1/PPP1R8. Component of the minor spliceosome, which splices U12-type introns. Within this complex, interacts with SCNM1. Component of the PRP19-CDC5L splicing complex composed of a core complex comprising a homotetramer of PRPF19, CDC5L, PLRG1 and BCAS2, and at least three less stably associated proteins CTNNBL1, CWC15 and HSPA8. Interacts (via its C-terminus) directly in the complex with PRPF19 and BCAS2. Interacts (via its C-terminus) directly with PRGL1 (via its WD40 repeat domain); the interaction is required for mRNA splicing but not for spliceosome assembly. Also interacts with CTNNBL1. Interacts with PRPF19 (via N-terminus). Interacts with USB1. Interacts with DDX41. Phosphorylated on serine and threonine residues. Phosphorylation on Thr-411 and Thr-438 is required for CDC5L-mediated mRNA splicing. Has no effect on subcellular location nor on homodimerization. Phosphorylated in vitro by CDK2. Phosphorylation enhances interaction with PPP1R8.

The protein resides in the nucleus. The protein localises to the nucleus speckle. It is found in the cytoplasm. In terms of biological role, DNA-binding protein involved in cell cycle control. May act as a transcription activator. Plays a role in pre-mRNA splicing as core component of precatalytic, catalytic and postcatalytic spliceosomal complexes. Component of the PRP19-CDC5L complex that forms an integral part of the spliceosome and is required for activating pre-mRNA splicing. The PRP19-CDC5L complex may also play a role in the response to DNA damage (DDR). As a component of the minor spliceosome, involved in the splicing of U12-type introns in pre-mRNAs. This is Cell division cycle 5-like protein (CDC5L) from Bos taurus (Bovine).